Here is a 986-residue protein sequence, read N- to C-terminus: Bifunctional glutamine synthetase adenylyltransferase/adenylyl-removing enzyme (986 aa).

Positions 1-470 (MAAVAKRTVT…ERHYAALFET (470 aa)) are adenylyl removase. An adenylyl transferase region spans residues 476–986 (AGIGNLVFTG…FDLLLRAGRP (511 aa)).

Belongs to the GlnE family. The cofactor is Mg(2+).

It catalyses the reaction [glutamine synthetase]-O(4)-(5'-adenylyl)-L-tyrosine + phosphate = [glutamine synthetase]-L-tyrosine + ADP. The catalysed reaction is [glutamine synthetase]-L-tyrosine + ATP = [glutamine synthetase]-O(4)-(5'-adenylyl)-L-tyrosine + diphosphate. Involved in the regulation of glutamine synthetase GlnA, a key enzyme in the process to assimilate ammonia. When cellular nitrogen levels are high, the C-terminal adenylyl transferase (AT) inactivates GlnA by covalent transfer of an adenylyl group from ATP to specific tyrosine residue of GlnA, thus reducing its activity. Conversely, when nitrogen levels are low, the N-terminal adenylyl removase (AR) activates GlnA by removing the adenylyl group by phosphorolysis, increasing its activity. The regulatory region of GlnE binds the signal transduction protein PII (GlnB) which indicates the nitrogen status of the cell. In Mesorhizobium japonicum (strain LMG 29417 / CECT 9101 / MAFF 303099) (Mesorhizobium loti (strain MAFF 303099)), this protein is Bifunctional glutamine synthetase adenylyltransferase/adenylyl-removing enzyme.